The primary structure comprises 999 residues: uncharacterized protein (999 aa).

Over residues 45–128 the composition is skewed to low complexity; sequence NSNNIGNGNG…TPTITPSSPS (84 aa). Positions 45 to 129 are disordered; sequence NSNNIGNGNG…PTITPSSPSV (85 aa). A coiled-coil region spans residues 723–767; sequence YQQSQQQQSQQQQQQQQQQQQQQQQQQQQQQQQQQQQQQQQQQQQ. The span at 873 to 887 shows a compositional bias: low complexity; it reads NDINNANNSNNNNNN. A disordered region spans residues 873–904; sequence NDINNANNSNNNNNNQSQVLLSPNRNKDGTLN. Residues 976–996 traverse the membrane as a helical segment; the sequence is LFSLVLILAFIWFFFEIYFFF.

The protein localises to the membrane. This is an uncharacterized protein from Dictyostelium discoideum (Social amoeba).